Here is a 337-residue protein sequence, read N- to C-terminus: Adenine deaminase (337 aa).

Zn(2+)-binding residues include His17, His19, and His197. Glu200 (proton donor) is an active-site residue. Asp278 lines the Zn(2+) pocket. A substrate-binding site is contributed by Asp279.

The protein belongs to the metallo-dependent hydrolases superfamily. Adenosine and AMP deaminases family. Adenine deaminase type 2 subfamily. The cofactor is Zn(2+).

It catalyses the reaction adenine + H2O + H(+) = hypoxanthine + NH4(+). Functionally, catalyzes the hydrolytic deamination of adenine to hypoxanthine. Plays an important role in the purine salvage pathway and in nitrogen catabolism. The sequence is that of Adenine deaminase from Zymomonas mobilis subsp. mobilis (strain ATCC 31821 / ZM4 / CP4).